The following is a 443-amino-acid chain: Magnesium transporter MRS2-10 (443 aa).

The segment at 1–33 is disordered; sequence MSELKERLLPPRPASAINLRGDAGSRPSPSGRQ. A run of 2 helical transmembrane segments spans residues 379–399 and 415–435; these read LLLTTATFVVAIFGVVAGIFG and WVLAITGVCGLVVFLAFLWYY. Residues 399–401 carry the Required for magnesium transport activity motif; sequence GMN.

It belongs to the CorA metal ion transporter (MIT) (TC 1.A.35.5) family. Expressed in the whole plant.

Its subcellular location is the cell membrane. In terms of biological role, high-affinity magnesium transporter that mediates the influx of magnesium. Involved in tolerance to Aluminum. The sequence is that of Magnesium transporter MRS2-10 (MRS2-10) from Arabidopsis thaliana (Mouse-ear cress).